Reading from the N-terminus, the 161-residue chain is Large ribosomal subunit protein uL15 (161 aa).

The segment at 1–57 is disordered; sequence MRLKDAIPKKGSQQRGRRVGRGISAGQGASCGKGMRGQKSRSGGSTRPGFEGGQNPL. Gly residues predominate over residues 23-35; the sequence is ISAGQGASCGKGM.

It belongs to the universal ribosomal protein uL15 family. In terms of assembly, part of the 50S ribosomal subunit.

Binds to the 23S rRNA. The sequence is that of Large ribosomal subunit protein uL15 from Trichodesmium erythraeum (strain IMS101).